Here is a 314-residue protein sequence, read N- to C-terminus: Putative methylthioribose-1-phosphate isomerase (314 aa).

Substrate-binding positions include 45 to 47 (RGA), arginine 79, and glutamine 177. Residue aspartate 218 is the Proton donor of the active site. 227 to 228 (NK) lines the substrate pocket.

It belongs to the eIF-2B alpha/beta/delta subunits family. MtnA subfamily.

The enzyme catalyses 5-(methylsulfanyl)-alpha-D-ribose 1-phosphate = 5-(methylsulfanyl)-D-ribulose 1-phosphate. Functionally, catalyzes the interconversion of methylthioribose-1-phosphate (MTR-1-P) into methylthioribulose-1-phosphate (MTRu-1-P). This is Putative methylthioribose-1-phosphate isomerase from Methanosphaera stadtmanae (strain ATCC 43021 / DSM 3091 / JCM 11832 / MCB-3).